The primary structure comprises 148 residues: MKLDLKILDARMRDYLPAYATAGSAGLDLRACLDAPLTLKPGDTALVPTGLAIHLADPNYAALILPRSGLGHKHGIVLGNLVGLIDSDYQGQLMVSTWNRGQTEFVLNPFERLAQLVIVPVVQAQFNIVDDFAQSERGAGGFGSTGRH.

Residues 67-69 (RSG), Asn-80, 84-86 (LID), and Met-94 contribute to the substrate site.

Belongs to the dUTPase family. It depends on Mg(2+) as a cofactor.

It carries out the reaction dUTP + H2O = dUMP + diphosphate + H(+). Its pathway is pyrimidine metabolism; dUMP biosynthesis; dUMP from dCTP (dUTP route): step 2/2. In terms of biological role, this enzyme is involved in nucleotide metabolism: it produces dUMP, the immediate precursor of thymidine nucleotides and it decreases the intracellular concentration of dUTP so that uracil cannot be incorporated into DNA. The polypeptide is Deoxyuridine 5'-triphosphate nucleotidohydrolase (Burkholderia multivorans (strain ATCC 17616 / 249)).